The primary structure comprises 447 residues: MNELLHLAPNVWPRNTTRDEVGVVCIAGIPLTQLAQEYGTPLFVIDEDDFRSRCRETAAAFGSGANVHYAAKAFLCSEVARWISEEGLCLDVCTGGELAVALHASFPPERITLHGNNKSVSELTAAVKAGVGHIVVDSMTEIERLDAIAGEAGIVQDVLVRLTVGVEAHTHEFISTAHEDQKFGLSVASGAAMAAVRRVFATDHLRLVGLHSHIGSQIFDVDGFELAAHRVIGLLRDVVGEFGPEKTAQIATVDLGGGLGISYLPSDDPPPIAELAAKLGTIVSDESTAVGLPTPKLVVEPGRAIAGPGTITLYEVGTVKDVDVSATAHRRYVSVDGGMSDNIRTALYGAQYDVRLVSRVSDAPPVPARLVGKHCESGDIIVRDTWVPDDIRPGDLVAVAATGAYCYSLSSRYNMVGRPAVVAVHAGNARLVLRRETVDDLLSLEVR.

At K72 the chain carries N6-(pyridoxal phosphate)lysine. Pyridoxal 5'-phosphate-binding positions include G258 and 300–303 (EPGR). R303, R344, and Y348 together coordinate substrate. C375 functions as the Proton donor in the catalytic mechanism. 2 residues coordinate substrate: E376 and Y405. Residue Y405 participates in pyridoxal 5'-phosphate binding.

Belongs to the Orn/Lys/Arg decarboxylase class-II family. LysA subfamily. As to quaternary structure, homodimer. Pyridoxal 5'-phosphate serves as cofactor.

It catalyses the reaction meso-2,6-diaminopimelate + H(+) = L-lysine + CO2. Its pathway is amino-acid biosynthesis; L-lysine biosynthesis via DAP pathway; L-lysine from DL-2,6-diaminopimelate: step 1/1. In terms of biological role, specifically catalyzes the decarboxylation of meso-diaminopimelate (meso-DAP) to L-lysine. This chain is Diaminopimelate decarboxylase, found in Mycobacterium bovis (strain ATCC BAA-935 / AF2122/97).